The following is a 268-amino-acid chain: MLPSIVKHATSHKINPLKKHGQNFIFDSSLCDKIIRASNVLENSNVIEIGPGIGGLTRSILQKNPKSLTVIEIDERCIPLLNEIQEYYPNLNIIKQDVLKINLTDLIYDKVTVISNLPYHIGTELVIRLLKEVKLITNMTLMLQKEVVERICAIPSTKAYGRLSVICQILAKVEKCFNVAPTAFYPHPKVYSAIVKIIPLENPPSIALINKVEQITKLVFAGRRKMIKSSLRNLIPNIHEVLTQLKINCNDRAENLTPKDYLRIAMKL.

The S-adenosyl-L-methionine site is built by N23, I25, G50, E72, D97, and N116.

The protein belongs to the class I-like SAM-binding methyltransferase superfamily. rRNA adenine N(6)-methyltransferase family. RsmA subfamily.

The protein resides in the cytoplasm. It catalyses the reaction adenosine(1518)/adenosine(1519) in 16S rRNA + 4 S-adenosyl-L-methionine = N(6)-dimethyladenosine(1518)/N(6)-dimethyladenosine(1519) in 16S rRNA + 4 S-adenosyl-L-homocysteine + 4 H(+). In terms of biological role, specifically dimethylates two adjacent adenosines (A1518 and A1519) in the loop of a conserved hairpin near the 3'-end of 16S rRNA in the 30S particle. May play a critical role in biogenesis of 30S subunits. The sequence is that of Ribosomal RNA small subunit methyltransferase A from Rickettsia prowazekii (strain Madrid E).